Here is a 244-residue protein sequence, read N- to C-terminus: MSMSMGVRGLALRSVSKTLFSQGVRCPSMVIGARYMSSTPEKQTDPKAKANSIINAIPGNNILTKTGVLGTSAAAVIYAISNELYVINDESILLLTFLGFTGLVAKYLAPAYKDFADARMKKVSDVLNASRNKHVEAVKDRIDSVSQLQNVAETTKVLFDVSKETVELESEAFELKQKVELAHEAKAVLDSWVRYEASLRQLEQRQLAKSVISRVQSELGNPKFQEKVLQQSISEIEQLLSKLK.

The N-terminal 35 residues, 1–35 (MSMSMGVRGLALRSVSKTLFSQGVRCPSMVIGARY), are a transit peptide targeting the mitochondrion. Ser144 carries the phosphoserine modification.

This sequence belongs to the eukaryotic ATPase B chain family. In terms of assembly, F-type ATPases have 2 components, CF(1) - the catalytic core - and CF(0) - the membrane proton channel. In yeast, the dimeric form of ATP synthase consists of 17 polypeptides: alpha, beta, gamma, delta, epsilon, 4 (B), 5 (OSCP), 6 (A), 8, 9 (C), d, E (Tim11), f, g, h, i/j and k.

The protein localises to the mitochondrion. It is found in the mitochondrion inner membrane. Functionally, mitochondrial membrane ATP synthase (F(1)F(0) ATP synthase or Complex V) produces ATP from ADP in the presence of a proton gradient across the membrane which is generated by electron transport complexes of the respiratory chain. F-type ATPases consist of two structural domains, F(1) - containing the extramembraneous catalytic core, and F(0) - containing the membrane proton channel, linked together by a central stalk and a peripheral stalk. During catalysis, ATP synthesis in the catalytic domain of F(1) is coupled via a rotary mechanism of the central stalk subunits to proton translocation. Part of the complex F(0) domain and the peripheric stalk, which acts as a stator to hold the catalytic alpha(3)beta(3) subcomplex and subunit a/ATP6 static relative to the rotary elements. This chain is ATP synthase subunit 4, mitochondrial (ATP4), found in Saccharomyces cerevisiae (strain ATCC 204508 / S288c) (Baker's yeast).